Consider the following 1035-residue polypeptide: Translation initiation factor IF-2 (1035 aa).

The segment covering 56 to 66 (KDDKSNTDDNK) has biased composition (basic and acidic residues). Disordered regions lie at residues 56–80 (KDDK…SSEA) and 114–402 (ANDA…VIKN). A compositionally biased stretch (polar residues) spans 68–78 (ASAHSVAQHSS). Basic and acidic residues-rich tracts occupy residues 114 to 137 (ANDA…RVET) and 146 to 200 (LVRE…EIKD). The span at 219–228 (DSATNVNLNE) shows a compositional bias: polar residues. Basic and acidic residues predominate over residues 229 to 238 (SIDKDKKTND). Polar residues predominate over residues 239 to 253 (NRQVSTDNSAVNNEE). Residues 259 to 315 (LNKKDMDKKNNNKKNEAKKNAEKKNEAKKNEKNDNKGGNAKKNEHRSPDMKKNDSNR) show a composition bias toward basic and acidic residues. Over residues 316-325 (PQDANKQNSK) the composition is skewed to polar residues. 2 stretches are compositionally biased toward basic and acidic residues: residues 327-347 (AADK…EIPK) and 354-385 (QKEE…KEQP). The 170-residue stretch at 537–706 (PRPPVVVVMG…LLAADMLELK (170 aa)) folds into the tr-type G domain. Residues 546–553 (GHVDHGKT) form a G1 region. GTP is bound at residue 546–553 (GHVDHGKT). The interval 571–575 (GITQH) is G2. The segment at 592–595 (DTPG) is G3. GTP contacts are provided by residues 592–596 (DTPGH) and 646–649 (NKID). The interval 646-649 (NKID) is G4. Residues 682–684 (SAK) are G5.

This sequence belongs to the TRAFAC class translation factor GTPase superfamily. Classic translation factor GTPase family. IF-2 subfamily.

It localises to the cytoplasm. In terms of biological role, one of the essential components for the initiation of protein synthesis. Protects formylmethionyl-tRNA from spontaneous hydrolysis and promotes its binding to the 30S ribosomal subunits. Also involved in the hydrolysis of GTP during the formation of the 70S ribosomal complex. The sequence is that of Translation initiation factor IF-2 from Acetivibrio thermocellus (strain ATCC 27405 / DSM 1237 / JCM 9322 / NBRC 103400 / NCIMB 10682 / NRRL B-4536 / VPI 7372) (Clostridium thermocellum).